The primary structure comprises 863 residues: MEIRKDYDAHEVEEKWLKLWKDEMYYFDWNSEKPHYIIDTPPPYPTGSFHIGHALNWCIIDFIARYKRMNGYEVMFPQGWDCHGLPTEVKVEEKYGIKKGDIPRDEFRRLCVEFTEENIAKMRETARRMGYSIDWSKEYITMYPEYYSKTQLSFVRMYNKGLIYRDYHPVVFCPRCETTIALAEIEYRQGKTKLNYIKFDDDVIIATTRPELIPACVAIAVHPDDERNKHLIGKKVRVPTTPYEVEVIADEEVDPEFGTGVVMICTFGDRQDVKWWKKHKLELRNIVGRDGRLNEKAGRYAGMTIPEAREAILEDLKKEGKLLKQVEIDHNVGTCWRCKTPVEIIPAEQWFVKVEKEKILEAAKRIKWVPEHMYSRLESWVQSMEWDWVISRQRIFATPIPAWYCKNCGEVVVAKEEWLPVDPTATQPPEPCPKCGSTEFRGETDVLDTWMDSSITPLMICGWPSLKEYPTHLRPQGHDIIRTWAFYTILRSLALEGQIPWYEIVINGMVFGEDGRKMSKSLGNVIVPEEVVEKYGVDALRQWAASGVIGDDIIFNWKDVIAASRFQQKFWSITRFTLMHISDYTPSEEDKKLLRDADRWILSKLNRLVGEVRKHMDEYRFDEAIKAIRTFTWYEYADNYLEIVKNRLYSGSEEEKRAAKFVLSYALDVLTRLLAPITPFMAEECWSHFREGSVHLQSYPVVEEEFLDERAEKAGEEIKEIVAAVRKFKHDKGLALNAPLKKLIVYSKLDGLDVRDIAGATNSEVEIVTEMPEVRERVKELKPKFAIIGPMFREKAKTLIKAVGSLSKEEKERLLKEGAIQVNLDGASVEVKAEWFEAVTEKSIEGREVEMLETANSVVFVEV.

The short motif at 43 to 53 (PYPTGSFHIGH) is the 'HIGH' region element. The 'KMSKS' region motif lies at 517-521 (KMSKS). Residue Lys520 participates in ATP binding.

Belongs to the class-I aminoacyl-tRNA synthetase family. ValS type 2 subfamily.

It localises to the cytoplasm. The enzyme catalyses tRNA(Val) + L-valine + ATP = L-valyl-tRNA(Val) + AMP + diphosphate. Its function is as follows. Catalyzes the attachment of valine to tRNA(Val). As ValRS can inadvertently accommodate and process structurally similar amino acids such as threonine, to avoid such errors, it has a 'posttransfer' editing activity that hydrolyzes mischarged Thr-tRNA(Val) in a tRNA-dependent manner. This Archaeoglobus fulgidus (strain ATCC 49558 / DSM 4304 / JCM 9628 / NBRC 100126 / VC-16) protein is Valine--tRNA ligase.